Reading from the N-terminus, the 1537-residue chain is Flocculation protein FLO1 (1537 aa).

The N-terminal stretch at 1 to 24 is a signal peptide; the sequence is MTMPHRYMFLAVFTLLALTSVASG. The region spanning 74–249 is the PA14 domain; sequence GGQTDISIDY…GTTVSDDFEG (176 aa). N-linked (GlcNAc...) asparagine glycans are attached at residues asparagine 135 and asparagine 187. The segment at 197–240 is sugar recognition; that stretch reads GGSLPPNIEGTVYMYAGYYYPMKVVYSNAVSWGTLPISVTLPDG. An N-linked (GlcNAc...) asparagine glycan is attached at asparagine 262. Tandem repeats lie at residues 278 to 322, 323 to 367, 368 to 412, 413 to 457, 458 to 502, 503 to 547, 548 to 592, 593 to 637, 638 to 682, 683 to 727, 728 to 772, 773 to 817, 818 to 862, 863 to 907, 908 to 952, 953 to 997, 998 to 1042, and 1043 to 1087. Positions 278–1087 are 18 X 45 AA approximate tandem repeats, Thr-rich; that stretch reads TTTEPWTGTF…KTPTTAISSS (810 aa). Residues asparagine 329, asparagine 374, asparagine 419, asparagine 464, asparagine 509, asparagine 554, asparagine 599, asparagine 644, asparagine 689, and asparagine 734 are each glycosylated (N-linked (GlcNAc...) asparagine). Disordered stretches follow at residues 770–799 and 860–889; these read LIST…NGQP. Residues 773–795 show a composition bias toward low complexity; that stretch reads TTTEPWTGTFTSTSTEMTTVTGT. The segment covering 863–885 has biased composition (low complexity); that stretch reads TTTEPWTGTFTSTSTEMTTITGT. Residues 995 to 1024 are disordered; it reads LISTTTEPWTGTFTSTSTEMTTVTGTNGQP. Residues 998–1020 are compositionally biased toward low complexity; sequence TTTEPWTGTFTSTSTEMTTVTGT. Asparagine 1114 carries N-linked (GlcNAc...) asparagine glycosylation. A run of 2 repeats spans residues 1118–1137 and 1138–1157. The tract at residues 1118–1157 is 2 X 20 AA approximate tandem repeats, Ser/Thr-rich; sequence VISSSVISSSVTSSLFTSSPVISSSVISSSTTTSTSIFSE. Low complexity predominate over residues 1161–1220; sequence SSVIPTSSSTSGSSESETSSAGSVSSSSFISSESSKSPTYSSSSLPLVTSATTSQETASS. Positions 1161–1232 are disordered; sequence SSVIPTSSST…PATTTKTSEQ (72 aa). The segment covering 1222–1232 has biased composition (polar residues); sequence PPATTTKTSEQ. A run of 6 repeats spans residues 1226 to 1276, 1291 to 1341, 1342 to 1392, 1408 to 1416, 1417 to 1425, and 1426 to 1434. Residues 1226–1392 are 3 X 51 AA approximate repeats, Ser/Thr-rich; it reads TTKTSEQTTL…TVYPTWRPQT (167 aa). The span at 1392–1404 shows a compositional bias: polar residues; sequence TANEESVSSKMNS. The disordered stretch occupies residues 1392–1414; sequence TANEESVSSKMNSATGETTTNTL. Positions 1405 to 1414 are enriched in low complexity; it reads ATGETTTNTL. The segment at 1408 to 1434 is 3 X 9 AA approximate tandem repeats, Thr-rich; it reads ETTTNTLAAETTTNTVAAETITNTGAA. The tract at residues 1468 to 1497 is disordered; the sequence is VSVSETGNTKSLTSSGLSTMSQQPRSTPAS. A compositionally biased stretch (polar residues) spans 1472 to 1497; that stretch reads ETGNTKSLTSSGLSTMSQQPRSTPAS. Glycine 1514 carries GPI-anchor amidated glycine lipidation. The propeptide at 1515–1537 is removed in mature form; the sequence is SANSLLAGSGLSVFIASLLLAII.

It belongs to the flocculin family. Post-translationally, extensively N- and O-glycosylated. In terms of processing, the GPI-anchor is attached to the protein in the endoplasmic reticulum and serves to target the protein to the cell surface. There, the glucosamine-inositol phospholipid moiety is cleaved off and the GPI-modified mannoprotein is covalently attached via its lipidless GPI glycan remnant to the 1,6-beta-glucan of the outer cell wall layer.

It localises to the cell membrane. Its subcellular location is the secreted. It is found in the cell wall. Cell wall protein that participates directly in adhesive cell-cell interactions during yeast flocculation, a reversible, asexual and Ca(2+)-dependent process in which cells adhere to form aggregates (flocs) consisting of thousands of cells. The lectin-like protein sticks out of the cell wall of flocculent cells and selectively binds mannose residues in the cell walls of adjacent cells. Activity is inhibited by mannose, but not by glucose, maltose, sucrose or galactose. Also involved in cell-substrate adhesion. The sequence is that of Flocculation protein FLO1 (FLO1) from Saccharomyces cerevisiae (strain ATCC 204508 / S288c) (Baker's yeast).